Here is a 142-residue protein sequence, read N- to C-terminus: Large ribosomal subunit protein uL11 (142 aa).

Belongs to the universal ribosomal protein uL11 family. Part of the ribosomal stalk of the 50S ribosomal subunit. Interacts with L10 and the large rRNA to form the base of the stalk. L10 forms an elongated spine to which L12 dimers bind in a sequential fashion forming a multimeric L10(L12)X complex. One or more lysine residues are methylated.

In terms of biological role, forms part of the ribosomal stalk which helps the ribosome interact with GTP-bound translation factors. In Pasteurella multocida (strain Pm70), this protein is Large ribosomal subunit protein uL11.